Consider the following 310-residue polypeptide: MKLMSGTANPDLSRSIADYLDAPLTASHIERFADGEIFVRIDENVRGEDVFILQSTSRPANDHLMELLICIDALVRASARRITAVIPYFGYARQDRKTGGRTPISAKLVANLIAKAGADRVLTVDLHAGQIQGFFDIPTDNLFATKVMEADIRRHYETDNLLIVSPDVGGVVRARALAKLLDAEIAIVDKRRPKAGVAEVMNIIGEVEGRRCILFDDMCDSGGTLVNAADALLEKGAIEVSAYVTHGVLSKDAQGRVDKSRLRELVVTDSVTEPPNSTATPKVRRLSVAPLLGEAIRRIANDESVSKLFD.

ATP is bound by residues 34-36 (DGE) and 93-94 (RQ). Residues histidine 127 and aspartate 167 each coordinate Mg(2+). Residue lysine 190 is part of the active site. D-ribose 5-phosphate is bound by residues arginine 192, aspartate 216, and 220 to 224 (DSGGT).

The protein belongs to the ribose-phosphate pyrophosphokinase family. Class I subfamily. In terms of assembly, homohexamer. Requires Mg(2+) as cofactor.

Its subcellular location is the cytoplasm. The catalysed reaction is D-ribose 5-phosphate + ATP = 5-phospho-alpha-D-ribose 1-diphosphate + AMP + H(+). It functions in the pathway metabolic intermediate biosynthesis; 5-phospho-alpha-D-ribose 1-diphosphate biosynthesis; 5-phospho-alpha-D-ribose 1-diphosphate from D-ribose 5-phosphate (route I): step 1/1. Involved in the biosynthesis of the central metabolite phospho-alpha-D-ribosyl-1-pyrophosphate (PRPP) via the transfer of pyrophosphoryl group from ATP to 1-hydroxyl of ribose-5-phosphate (Rib-5-P). This Maricaulis maris (strain MCS10) (Caulobacter maris) protein is Ribose-phosphate pyrophosphokinase.